A 270-amino-acid polypeptide reads, in one-letter code: 3-methyl-2-oxobutanoate hydroxymethyltransferase (270 aa).

Positions 43 and 82 each coordinate Mg(2+). 3-methyl-2-oxobutanoate-binding positions include 43 to 44, aspartate 82, and lysine 110; that span reads DS. A Mg(2+)-binding site is contributed by glutamate 112. The active-site Proton acceptor is the glutamate 179.

This sequence belongs to the PanB family. Homodecamer; pentamer of dimers. The cofactor is Mg(2+).

The protein resides in the cytoplasm. The catalysed reaction is 3-methyl-2-oxobutanoate + (6R)-5,10-methylene-5,6,7,8-tetrahydrofolate + H2O = 2-dehydropantoate + (6S)-5,6,7,8-tetrahydrofolate. It functions in the pathway cofactor biosynthesis; (R)-pantothenate biosynthesis; (R)-pantoate from 3-methyl-2-oxobutanoate: step 1/2. Catalyzes the reversible reaction in which hydroxymethyl group from 5,10-methylenetetrahydrofolate is transferred onto alpha-ketoisovalerate to form ketopantoate. This chain is 3-methyl-2-oxobutanoate hydroxymethyltransferase, found in Psychrobacter sp. (strain PRwf-1).